Reading from the N-terminus, the 529-residue chain is UDP-glucuronosyltransferase 2B28 (529 aa).

A signal peptide spans 1-24 (MALKWTSVLLLIHLGCYFSSGSCG). At K135 the chain carries N6-succinyllysine. N315 carries an N-linked (GlcNAc...) asparagine glycan. Residues 495–517 (GFLLACVATVIFVVTKFCLFCFW) traverse the membrane as a helical segment.

It belongs to the UDP-glycosyltransferase family. Expressed in the liver, breast and kidney.

The protein localises to the endoplasmic reticulum membrane. The protein resides in the cytoplasm. It localises to the perinuclear region. It catalyses the reaction glucuronate acceptor + UDP-alpha-D-glucuronate = acceptor beta-D-glucuronoside + UDP + H(+). Its function is as follows. UDP-glucuronosyltransferase (UGT) that catalyzes phase II biotransformation reactions in which lipophilic substrates are conjugated with glucuronic acid to increase the metabolite's water solubility, thereby facilitating excretion into either the urine or bile. Essential for the elimination and detoxification of drugs, xenobiotics and endogenous compounds. Catalyzes the glucuronidation of endogenous steroid hormones such as androgens (androsterone, 3alpha-androstanediol) and estrogens (estradiol, estrone). Catalyzes the glucuronidation of bile acid substrates, which are natural detergents for dietary lipids absorption. Displays glucuronidation activity toward the phenolic compounds eugenol. Lack UDP-glucuronosyltransferase (UGT) activity. The polypeptide is UDP-glucuronosyltransferase 2B28 (Homo sapiens (Human)).